The following is a 624-amino-acid chain: (-)-beta-phellandrene synthase 3, chloroplastic (624 aa).

The N-terminal 48 residues, 1-48, are a transit peptide targeting the chloroplast; sequence MAIVSSVPLASKSCLHKSLISSIHKLKPFCRTIPTLGMSRPGKYVMPS. Mg(2+)-binding residues include aspartate 375, aspartate 379, and aspartate 527. A DDXXD motif motif is present at residues 375–379; sequence DDMYD.

It belongs to the terpene synthase family. Tpsd subfamily. The cofactor is Mg(2+). Mn(2+) serves as cofactor.

Its subcellular location is the plastid. The protein localises to the chloroplast. It carries out the reaction (2E)-geranyl diphosphate = (-)-beta-phellandrene + diphosphate. It participates in terpene metabolism; oleoresin biosynthesis. In terms of biological role, terpene synthase (TPS) involved in the biosynthesis of monoterpene natural products included in conifer oleoresin secretions and volatile emissions; these compounds contribute to biotic and abiotic stress defense against herbivores and pathogens. Catalyzes the conversion of (2E)-geranyl diphosphate (GPP) to (-)-beta-phellandrene. This is (-)-beta-phellandrene synthase 3, chloroplastic from Picea sitchensis (Sitka spruce).